The sequence spans 267 residues: 2-keto-3-deoxy-L-rhamnonate aldolase (267 aa).

His-49 functions as the Proton acceptor in the catalytic mechanism. Residue Gln-151 participates in substrate binding. Glu-153 contributes to the Mg(2+) binding site. The substrate site is built by Ala-178 and Asp-179. Asp-179 provides a ligand contact to Mg(2+).

The protein belongs to the HpcH/HpaI aldolase family. KDR aldolase subfamily. Homohexamer. It depends on Mg(2+) as a cofactor.

It catalyses the reaction 2-dehydro-3-deoxy-L-rhamnonate = (S)-lactaldehyde + pyruvate. Functionally, catalyzes the reversible retro-aldol cleavage of 2-keto-3-deoxy-L-rhamnonate (KDR) to pyruvate and lactaldehyde. The protein is 2-keto-3-deoxy-L-rhamnonate aldolase of Salmonella paratyphi A (strain ATCC 9150 / SARB42).